Reading from the N-terminus, the 64-residue chain is Palmitoyl-CoA hydrolase (64 aa).

It belongs to the type-B carboxylesterase/lipase family. As to quaternary structure, monomer and homotrimer.

It is found in the microsome. The protein localises to the endoplasmic reticulum. The catalysed reaction is hexadecanoyl-CoA + H2O = hexadecanoate + CoA + H(+). Functionally, hydrolysis of a variety of CoA thioesters of long-chain fatty acids. This is Palmitoyl-CoA hydrolase from Rattus norvegicus (Rat).